The primary structure comprises 410 residues: Chitin deacetylase 3 (410 aa).

An N-terminal signal peptide occupies residues 1-18 (MYGHLSLSTLSLLAVVAA). The propeptide occupies 19–39 (APFPESWLQPRDSDVSQLFRR). Asn-61 and Asn-80 each carry an N-linked (GlcNAc...) asparagine glycan. A NodB homology domain is found at 124–314 (KVWALSFDDG…KAVANGWSVK (191 aa)). Residue Asp-131 is the Proton acceptor of the active site. Acetate is bound at residue Asp-131. Asp-132 is a binding site for Co(2+). N-linked (GlcNAc...) asparagine glycosylation occurs at Asn-149. Residues His-183 and His-187 each contribute to the Co(2+) site. Residue Tyr-225 participates in acetate binding. Asn-279 carries an N-linked (GlcNAc...) asparagine glycan. His-289 acts as the Proton donor in catalysis. N-linked (GlcNAc...) asparagine glycosylation is present at Asn-293. The GPI-anchor amidated serine moiety is linked to residue Ser-385. Positions 386–410 (SSWPIANRPSLFVIACGLALAAIMV) are cleaved as a propeptide — removed in mature form.

It belongs to the polysaccharide deacetylase family. Co(2+) is required as a cofactor.

Its subcellular location is the cell membrane. The enzyme catalyses [(1-&gt;4)-N-acetyl-beta-D-glucosaminyl](n) + n H2O = chitosan + n acetate. In terms of biological role, hydrolyzes the N-acetamido groups of N-acetyl-D-glucosamine residues in chitin to form chitosan and acetate. Chitosan is required to anchor melanin to the cell wall, for maintenance of cell wall integrity, and for proper cytokinesis. Chitosan offers an advantage during infection as it is less readily detected than chitin by host immunosurveillance mechanisms. This chain is Chitin deacetylase 3, found in Cryptococcus neoformans var. neoformans serotype D (strain JEC21 / ATCC MYA-565) (Filobasidiella neoformans).